The following is a 265-amino-acid chain: Polyprenol monophosphomannose synthase (265 aa).

The span at 1–10 shows a compositional bias: basic and acidic residues; the sequence is MSVPGEREQG. The segment at 1 to 21 is disordered; sequence MSVPGEREQGAGEDPATVRPT.

Belongs to the glycosyltransferase 2 family. As to quaternary structure, interacts with Lnt (also called Ppm2, AC A0QZ13) upon coexpression in E.coli, which increases the PPM synthase activity of this protein.

The protein resides in the cytoplasm. The catalysed reaction is a di-trans,poly-cis-dolichyl phosphate + GDP-alpha-D-mannose = a di-trans,poly-cis-dolichyl beta-D-mannosyl phosphate + GDP. In terms of biological role, transfers mannose from GDP-mannose to lipid acceptors to form polyprenol monophosphomannose (PPM); catalytic activity in vitro is enhanced by Lnt (AC A0QZ13). PMM is an alkai-stable sugar donor which adds mannose-phosphate residues to triacylated-PIM2, eventually leading to generation of the cell wall glycolipid lipoglycan modulins lipoarabinomannan (LAM) and lipomannan (LM). This is Polyprenol monophosphomannose synthase from Mycolicibacterium smegmatis (strain ATCC 700084 / mc(2)155) (Mycobacterium smegmatis).